The chain runs to 501 residues: MRYHISTNFFKKKYSDCLVFGIFDDLQLCESVKVIDSGSDGYVSRLIKDNEISGQINESLLLHSIPNFQKLKILFLGCGKKERFNINLYQKLFKTSINIIKKLSVKALIYFVTDFHIKNINTYWKIRHAVSEIQDNLYSFKNFKTSNNKNKFKISLEDIYFYLSDHDEINSGNNAIQHGYAISKGKKIARDLSNMPPNICNSSYLADQAMKLSQYYPDLIDVEIINDIDMNKLGMNAYLSVGKGSKNKSLMSIIKYHGISFSQCKNIILIGKGVTFDSGGISIKTSRDLDEMKFDMSGAAIVFGLMSIISDLKLPLNIIGILAGSENMVSSMSFRPGDILTTMSGKTVEILNTDAEGRLILCDVLTYVERFSPEVVIDIATLTGACVVALGHHTTGLLSNNDILAKDLQKASKQTRDLIWRMPLFEEYYKDLDSNVADMANVGTNSAGMITAACFLSKFSQKYAWAHLDVAGTAWISGKNKGSTGRPINLLTQFLLNKLYK.

Positions 272 and 277 each coordinate Mn(2+). Lys284 is a catalytic residue. Mn(2+)-binding residues include Asp295, Asp354, and Glu356. The active site involves Arg358.

This sequence belongs to the peptidase M17 family. Mn(2+) is required as a cofactor.

The protein localises to the cytoplasm. The enzyme catalyses Release of an N-terminal amino acid, Xaa-|-Yaa-, in which Xaa is preferably Leu, but may be other amino acids including Pro although not Arg or Lys, and Yaa may be Pro. Amino acid amides and methyl esters are also readily hydrolyzed, but rates on arylamides are exceedingly low.. It catalyses the reaction Release of an N-terminal amino acid, preferentially leucine, but not glutamic or aspartic acids.. Presumably involved in the processing and regular turnover of intracellular proteins. Catalyzes the removal of unsubstituted N-terminal amino acids from various peptides. The protein is Probable cytosol aminopeptidase of Buchnera aphidicola subsp. Baizongia pistaciae (strain Bp).